The primary structure comprises 2969 residues: Histone-lysine N-methyltransferase ASH1L (2969 aa).

2 disordered regions span residues 1 to 70 and 118 to 143; these read MDPR…TDAQ and HPRK…RDPS. Residues 21 to 31 are compositionally biased toward polar residues; it reads KSPSAISTGTL. A Phosphoserine modification is found at Ser-22. 2 stretches are compositionally biased toward basic and acidic residues: residues 33-65 and 127-143; these read SKRE…KDDG and KMTD…RDPS. Residue Lys-34 forms a Glycyl lysine isopeptide (Lys-Gly) (interchain with G-Cter in SUMO2) linkage. Lys-375 bears the N6-acetyllysine mark. Lys-425 participates in a covalent cross-link: Glycyl lysine isopeptide (Lys-Gly) (interchain with G-Cter in SUMO2). The segment covering 501 to 511 has biased composition (polar residues); sequence IQQDSFSSSEK. Disordered stretches follow at residues 501-525, 537-583, 824-845, 878-966, 1100-1128, 1151-1231, and 1243-1281; these read IQQD…QPPV, ASDV…PNPL, YKPK…PPKR, KQGL…EMEP, SEIL…AGFV, MKKA…EHVS, and SLKE…QLRN. Residues 512–522 are compositionally biased toward basic and acidic residues; the sequence is GSYETSKHEKQ. The segment covering 554-579 has biased composition (polar residues); the sequence is NLPSPSPTVSVNPLTRSPPETSSQLA. Basic residues predominate over residues 887-897; the sequence is PKKRGRPKRQM. Residues 887–899 constitute a DNA-binding region (a.T hook 1); sequence PKKRGRPKRQMRS. Residues 920 to 932 are compositionally biased toward basic and acidic residues; the sequence is SKLESESDNHRSS. Over residues 936–949 the composition is skewed to acidic residues; it reads FESEDQLQDPDDLD. Composition is skewed to low complexity over residues 1100 to 1123 and 1162 to 1175; these read SEIL…PVSS and SPPT…SHLS. Phosphoserine occurs at positions 1162 and 1170. Residues 1186 to 1211 are compositionally biased toward polar residues; sequence SPISESHSDETIPSDSGIGTDNNSTS. Gln-1220 is modified (N5-methylglutamine). 2 stretches are compositionally biased toward basic residues: residues 1246-1256 and 1266-1277; these read EKHKHKCKRRN and KRQKRKRKKKYP. A DNA-binding region (a.T hook 2) is located at residues 1347–1359; the sequence is KKKRGRPPKMREA. Disordered stretches follow at residues 1489 to 1508, 1580 to 1711, and 1741 to 1761; these read HREH…GSSR, SESS…ASGD, and ASAP…TLGK. 4 stretches are compositionally biased toward polar residues: residues 1496–1508, 1580–1598, 1605–1622, and 1650–1680; these read EQPQ…GSSR, SESS…SEPA, NLFT…PNSS, and LPSN…STNC. Positions 1741 to 1751 are enriched in low complexity; it reads ASAPPSSSPGR. Positions 1847–1859 form a DNA-binding region, a.T hook 3; it reads KRRPGRPRKCPLQ. Residues 1911 to 1991 form a disordered region; it reads KKGLKRKGWL…PRPPKKKYQK (81 aa). The interval 2069-2288 is catalytic domain; the sequence is PDVPLYKKIR…KCRGIIGGKS (220 aa). Residues 2091 to 2142 form the AWS domain; it reads YEATTCNCKKPDDDTRKGCVDDCLNRMIFAECSPNTCPCGEQCCNQRIQRHE. The 117-residue stretch at 2145–2261 folds into the SET domain; that stretch reads QCLERFRAEE…AGTELTYDYN (117 aa). The Post-SET domain maps to 2269–2285; the sequence is KQQLCKCGFEKCRGIIG. The disordered stretch occupies residues 2288-2346; it reads SQRVNGLTSSKNSQPMATHKKSGRSKEKRKSKHKLKKRRGHLSEEPSENINTPTRLTPQ. Positions 2289–2303 are enriched in polar residues; sequence QRVNGLTSSKNSQPM. A compositionally biased stretch (basic residues) spans 2305 to 2327; sequence THKKSGRSKEKRKSKHKLKKRRG. Residues Lys-2317, Lys-2319, and Lys-2323 each carry the N6-acetyllysine modification. Positions 2335–2346 are enriched in polar residues; sequence ENINTPTRLTPQ. A Bromo domain is found at 2444–2550; that stretch reads RLAQIFKEIC…KAYYNARHEA (107 aa). Residues 2585 to 2631 form a PHD-type zinc finger; the sequence is VIRCICGLYKDEGLMIQCDKCMVWQHCDCMGVNSDVEHYLCEQCDPR. The BAH domain maps to 2661-2798; sequence LLLRQGDCVY…KSAHLFYKIH (138 aa). 2 disordered regions span residues 2825–2856 and 2876–2919; these read SPHY…DLGQ and NEIP…RRHN. Residues 2842–2855 show a composition bias toward basic and acidic residues; the sequence is WKSERSKPPLKDLG.

Belongs to the class V-like SAM-binding methyltransferase superfamily. Histone-lysine methyltransferase family. SET2 subfamily. Post-translationally, methylated at Gln-1220 by N6AMT1. As to expression, widely expressed, with highest level in brain, heart and kidney.

Its subcellular location is the nucleus. The protein localises to the cell junction. It localises to the tight junction. The protein resides in the chromosome. The catalysed reaction is L-lysyl(36)-[histone H3] + 3 S-adenosyl-L-methionine = N(6),N(6),N(6)-trimethyl-L-lysyl(36)-[histone H3] + 3 S-adenosyl-L-homocysteine + 3 H(+). The enzyme catalyses L-lysyl(9)-[histone H3] + S-adenosyl-L-methionine = N(6)-methyl-L-lysyl(9)-[histone H3] + S-adenosyl-L-homocysteine + H(+). In terms of biological role, histone methyltransferase specifically trimethylating 'Lys-36' of histone H3 forming H3K36me3. Also monomethylates 'Lys-9' of histone H3 (H3K9me1) in vitro. The physiological significance of the H3K9me1 activity is unclear. In Homo sapiens (Human), this protein is Histone-lysine N-methyltransferase ASH1L (ASH1L).